A 257-amino-acid polypeptide reads, in one-letter code: 3-deoxy-manno-octulosonate cytidylyltransferase (257 aa).

Belongs to the KdsB family.

Its subcellular location is the cytoplasm. It catalyses the reaction 3-deoxy-alpha-D-manno-oct-2-ulosonate + CTP = CMP-3-deoxy-beta-D-manno-octulosonate + diphosphate. Its pathway is nucleotide-sugar biosynthesis; CMP-3-deoxy-D-manno-octulosonate biosynthesis; CMP-3-deoxy-D-manno-octulosonate from 3-deoxy-D-manno-octulosonate and CTP: step 1/1. It participates in bacterial outer membrane biogenesis; lipopolysaccharide biosynthesis. In terms of biological role, activates KDO (a required 8-carbon sugar) for incorporation into bacterial lipopolysaccharide in Gram-negative bacteria. This chain is 3-deoxy-manno-octulosonate cytidylyltransferase, found in Methylococcus capsulatus (strain ATCC 33009 / NCIMB 11132 / Bath).